We begin with the raw amino-acid sequence, 89 residues long: Small ribosomal subunit protein uS14A (89 aa).

The protein belongs to the universal ribosomal protein uS14 family. Part of the 30S ribosomal subunit. Contacts proteins S3 and S10.

Its function is as follows. Binds 16S rRNA, required for the assembly of 30S particles and may also be responsible for determining the conformation of the 16S rRNA at the A site. This chain is Small ribosomal subunit protein uS14A, found in Lactiplantibacillus plantarum (strain ATCC BAA-793 / NCIMB 8826 / WCFS1) (Lactobacillus plantarum).